The primary structure comprises 271 residues: MTVKQSEASRLGPIFDVCRDDGRAALIGYLPTGYPDVTTSVHAMVALVESGCDIVEVGVPYSDPGMDGPTIVKATEAALHGGVRVRDTLAAVEAISAAGGHAVVMTYWNPVLRYGIDAFARDLASAGGYGLITPDLIPDEAGQWLAASEEHRLDRIFLVAPSSTPQRLAMTVEASRGFVYAASTMGVTGARDVVSNAAPELVGRVKEISDIPVGVGLGVRSGEQAAQIGGYADGVIVGSALVSALGDGGLTALRALTEELAAGVRQRAAAS.

Active-site proton acceptor residues include Glu56 and Asp67.

It belongs to the TrpA family. Tetramer of two alpha and two beta chains.

The catalysed reaction is (1S,2R)-1-C-(indol-3-yl)glycerol 3-phosphate + L-serine = D-glyceraldehyde 3-phosphate + L-tryptophan + H2O. The protein operates within amino-acid biosynthesis; L-tryptophan biosynthesis; L-tryptophan from chorismate: step 5/5. The alpha subunit is responsible for the aldol cleavage of indoleglycerol phosphate to indole and glyceraldehyde 3-phosphate. The chain is Tryptophan synthase alpha chain from Mycobacterium intracellulare.